The primary structure comprises 269 residues: Rhamnulose-1-phosphate aldolase (269 aa).

Glu-119 is a catalytic residue. Zn(2+)-binding residues include His-142, His-144, and His-214.

This sequence belongs to the aldolase class II family. RhaD subfamily. The cofactor is Zn(2+).

It is found in the cytoplasm. The enzyme catalyses L-rhamnulose 1-phosphate = (S)-lactaldehyde + dihydroxyacetone phosphate. The protein operates within carbohydrate degradation; L-rhamnose degradation; glycerone phosphate from L-rhamnose: step 3/3. Catalyzes the reversible cleavage of L-rhamnulose-1-phosphate to dihydroxyacetone phosphate (DHAP) and L-lactaldehyde. The sequence is that of Rhamnulose-1-phosphate aldolase from Bacteroides thetaiotaomicron (strain ATCC 29148 / DSM 2079 / JCM 5827 / CCUG 10774 / NCTC 10582 / VPI-5482 / E50).